We begin with the raw amino-acid sequence, 343 residues long: Phenylalanine--tRNA ligase alpha subunit (343 aa).

A Mg(2+)-binding site is contributed by E258.

Belongs to the class-II aminoacyl-tRNA synthetase family. Phe-tRNA synthetase alpha subunit type 1 subfamily. As to quaternary structure, tetramer of two alpha and two beta subunits. It depends on Mg(2+) as a cofactor.

The protein resides in the cytoplasm. The catalysed reaction is tRNA(Phe) + L-phenylalanine + ATP = L-phenylalanyl-tRNA(Phe) + AMP + diphosphate + H(+). The chain is Phenylalanine--tRNA ligase alpha subunit from Symbiobacterium thermophilum (strain DSM 24528 / JCM 14929 / IAM 14863 / T).